A 603-amino-acid polypeptide reads, in one-letter code: Phosphomethylpyrimidine synthase (603 aa).

Substrate is bound by residues asparagine 224, methionine 253, tyrosine 282, histidine 318, 338-340 (SRG), 379-382 (DGLR), and glutamate 418. Residue histidine 422 coordinates Zn(2+). Tyrosine 445 provides a ligand contact to substrate. Histidine 486 serves as a coordination point for Zn(2+). [4Fe-4S] cluster is bound by residues cysteine 566, cysteine 569, and cysteine 574.

It belongs to the ThiC family. Homodimer. The cofactor is [4Fe-4S] cluster.

The enzyme catalyses 5-amino-1-(5-phospho-beta-D-ribosyl)imidazole + S-adenosyl-L-methionine = 4-amino-2-methyl-5-(phosphooxymethyl)pyrimidine + CO + 5'-deoxyadenosine + formate + L-methionine + 3 H(+). Its pathway is cofactor biosynthesis; thiamine diphosphate biosynthesis. In terms of biological role, catalyzes the synthesis of the hydroxymethylpyrimidine phosphate (HMP-P) moiety of thiamine from aminoimidazole ribotide (AIR) in a radical S-adenosyl-L-methionine (SAM)-dependent reaction. This Xylella fastidiosa (strain Temecula1 / ATCC 700964) protein is Phosphomethylpyrimidine synthase.